The following is a 540-amino-acid chain: Upstream-binding protein 1 (540 aa).

The residue at position 22 (Ser22) is a Phosphoserine. A Grh/CP2 DB domain is found at 60-296; it reads EHPPFQYVMC…EQKKSSKRTL (237 aa). Disordered regions lie at residues 236–270 and 285–368; these read KPKG…DTTI and EHEQ…QPSA. Residues 238-262 are compositionally biased toward basic and acidic residues; it reads KGADRKQKTDREKMEKRTAHEKEKY. A compositionally biased stretch (polar residues) spans 320 to 368; sequence YVNNSPSPAPTFTSPQQSTCSVPDSNSSSPNHQGDGASQTSGEQIQPSA. 2 positions are modified to phosphoserine: Ser390 and Ser393.

Belongs to the grh/CP2 family. CP2 subfamily. As to quaternary structure, interacts with TFCP2. Interacts with PIAS1, and is probably part of a complex containing TFCP2, UBP1 and PIAS1. In terms of tissue distribution, expressed in adrenal tissue, JEG-3, NCI-H295A, Hep-G2 and HeLa cell lines.

It localises to the nucleus. Functionally, functions as a transcriptional activator in a promoter context-dependent manner. Modulates the placental expression of CYP11A1. Involved in regulation of the alpha-globin gene in erythroid cells. Activation of the alpha-globin promoter in erythroid cells is via synergistic interaction with TFCP2. Involved in regulation of the alpha-globin gene in erythroid cells. Binds strongly to sequences around the HIV-1 initiation site and weakly over the TATA-box. Represses HIV-1 transcription by inhibiting the binding of TFIID to the TATA-box. The protein is Upstream-binding protein 1 (UBP1) of Homo sapiens (Human).